Reading from the N-terminus, the 469-residue chain is GTPase Der (469 aa).

EngA-type G domains follow at residues 3 to 167 and 176 to 349; these read PTLV…PEEE and PKIA…AAAF. Residues 9–16, 56–60, 119–122, 182–189, 229–233, and 294–297 each bind GTP; these read GRPNVGKS, DTGGL, NKAE, DTAGV, and NKWD. Positions 350 to 436 constitute a KH-like domain; sequence IKLSTPKLTR…RIQIKEDEGK (87 aa). The segment covering 432–443 has biased composition (basic and acidic residues); sequence EDEGKNPFEGKK. The segment at 432 to 469 is disordered; the sequence is EDEGKNPFEGKKRAPLSESEATRMRRKKRVRRKVYGAD. The segment covering 455–469 has biased composition (basic residues); it reads MRRKKRVRRKVYGAD.

The protein belongs to the TRAFAC class TrmE-Era-EngA-EngB-Septin-like GTPase superfamily. EngA (Der) GTPase family. In terms of assembly, associates with the 50S ribosomal subunit.

Functionally, GTPase that plays an essential role in the late steps of ribosome biogenesis. This is GTPase Der from Thiobacillus denitrificans (strain ATCC 25259 / T1).